The following is a 102-amino-acid chain: NADH-quinone oxidoreductase subunit K (102 aa).

A run of 3 helical transmembrane segments spans residues 2–22 (LDFY…GVIL), 26–46 (IFTI…IFAT), and 58–78 (VIVM…LALI).

This sequence belongs to the complex I subunit 4L family. In terms of assembly, NDH-1 is composed of 14 different subunits. Subunits NuoA, H, J, K, L, M, N constitute the membrane sector of the complex.

The protein localises to the cell inner membrane. The catalysed reaction is a quinone + NADH + 5 H(+)(in) = a quinol + NAD(+) + 4 H(+)(out). Functionally, NDH-1 shuttles electrons from NADH, via FMN and iron-sulfur (Fe-S) centers, to quinones in the respiratory chain. The immediate electron acceptor for the enzyme in this species is believed to be ubiquinone. Couples the redox reaction to proton translocation (for every two electrons transferred, four hydrogen ions are translocated across the cytoplasmic membrane), and thus conserves the redox energy in a proton gradient. This Campylobacter fetus subsp. fetus (strain 82-40) protein is NADH-quinone oxidoreductase subunit K.